The sequence spans 555 residues: Synaptotagmin-14 (555 aa).

Residues 1 to 24 (MAIEGGERTCGVHELICIRKVSPE) lie on the Extracellular side of the membrane. The chain crosses the membrane as a helical; Signal-anchor for type III membrane protein span at residues 25–47 (AVGFLSAVGVFIVLMLLLFLYIN). Topologically, residues 48–555 (KKFCFENVGG…VCRWHALLES (508 aa)) are cytoplasmic. 3 disordered regions span residues 76–97 (YNSYMDRDEPGSSSESEDEALG), 157–179 (TPPLDELQPPPYQDDSGSPHLSC), and 205–258 (CPSE…PEPE). Positions 211–224 (TGHEAESYHNKGYE) are enriched in basic and acidic residues. C2 domains are found at residues 260–379 (KYGT…SLPV) and 415–550 (SVPE…CRWH).

The protein belongs to the synaptotagmin family. Homodimer. Can also form heterodimers. In terms of tissue distribution, expressed in heart and testis. Expressed in brain (especially in the cerebellum).

The protein resides in the membrane. In terms of biological role, may be involved in the trafficking and exocytosis of secretory vesicles in non-neuronal tissues. Is Ca(2+)-independent. The protein is Synaptotagmin-14 (Syt14) of Mus musculus (Mouse).